The following is a 115-amino-acid chain: MNRKFLPKRARLLNLNEFIFVFQKPERVKTTGITLFSRSNRLGYPRIGLAISKKYVKYAHERNRIKRHIRETFRTCQHNLLAKDFVLTIRSKEIIYYKNKTLIQELEKLWYHHLC.

The protein belongs to the RnpA family. In terms of assembly, consists of a catalytic RNA component (M1 or rnpB) and a protein subunit.

It catalyses the reaction Endonucleolytic cleavage of RNA, removing 5'-extranucleotides from tRNA precursor.. Functionally, RNaseP catalyzes the removal of the 5'-leader sequence from pre-tRNA to produce the mature 5'-terminus. It can also cleave other RNA substrates such as 4.5S RNA. The protein component plays an auxiliary but essential role in vivo by binding to the 5'-leader sequence and broadening the substrate specificity of the ribozyme. The protein is Ribonuclease P protein component of Blochmanniella pennsylvanica (strain BPEN).